A 532-amino-acid polypeptide reads, in one-letter code: Cytochrome P450 99A2 (532 aa).

A helical membrane pass occupies residues 30-50 (SAATLTLVSLLTLPILLALLT). Cys-468 provides a ligand contact to heme. The helical transmembrane segment at 473–493 (FGMVLLELIVARLLYYFDWSL) threads the bilayer.

Belongs to the cytochrome P450 family. Heme serves as cofactor.

Its subcellular location is the membrane. In terms of biological role, involved in momilactone phytoalexins biosynthesis. Participates in the biosynthetic steps between 9-beta-pimara-7,15-diene and 3-beta-hydroxy-9-beta-pimara-7,15-dien-19,6-beta-olide. The sequence is that of Cytochrome P450 99A2 (CYP99A2) from Oryza sativa subsp. japonica (Rice).